Here is a 128-residue protein sequence, read N- to C-terminus: Cytochrome c-type biogenesis protein CcmE (128 aa).

At M1–R8 the chain is on the cytoplasmic side. Residues L9 to N29 form a helical; Signal-anchor for type II membrane protein membrane-spanning segment. Over L30–S128 the chain is Periplasmic. The heme site is built by H120 and Y124.

The protein belongs to the CcmE/CycJ family.

It localises to the cell inner membrane. Functionally, heme chaperone required for the biogenesis of c-type cytochromes. Transiently binds heme delivered by CcmC and transfers the heme to apo-cytochromes in a process facilitated by CcmF and CcmH. The sequence is that of Cytochrome c-type biogenesis protein CcmE from Rickettsia typhi (strain ATCC VR-144 / Wilmington).